Here is a 199-residue protein sequence, read N- to C-terminus: Octanoyltransferase (199 aa).

Residues 27-199 (SNSCDELWLL…FVQYFLTQFK (173 aa)) enclose the BPL/LPL catalytic domain. Substrate-binding positions include 66–73 (RGGQVTYH), 133–135 (SIG), and 146–148 (GIA). Cys164 functions as the Acyl-thioester intermediate in the catalytic mechanism.

This sequence belongs to the LipB family.

The protein resides in the cytoplasm. It carries out the reaction octanoyl-[ACP] + L-lysyl-[protein] = N(6)-octanoyl-L-lysyl-[protein] + holo-[ACP] + H(+). It functions in the pathway protein modification; protein lipoylation via endogenous pathway; protein N(6)-(lipoyl)lysine from octanoyl-[acyl-carrier-protein]: step 1/2. In terms of biological role, catalyzes the transfer of endogenously produced octanoic acid from octanoyl-acyl-carrier-protein onto the lipoyl domains of lipoate-dependent enzymes. Lipoyl-ACP can also act as a substrate although octanoyl-ACP is likely to be the physiological substrate. This is Octanoyltransferase from Legionella pneumophila (strain Corby).